Reading from the N-terminus, the 71-residue chain is Brevinin-1SN2 (71 aa).

A signal peptide spans 1–22 (MFTMKKSLLLIFFLGTINLSLC). A propeptide spans 23-45 (EEERNADEDEKRDGDDESDVEVQ) (removed in mature form). A disulfide bond links Cys-65 and Cys-71.

The protein belongs to the frog skin active peptide (FSAP) family. Brevinin subfamily. Expressed by the skin glands.

It is found in the secreted. Antimicrobial peptide. Active against a variety of Gram-negative and Gram-positive bacterial strains. Active against fungus C.glabrata 090902 and C.albicans ATCC 10231. Shows hemolytic activity against human erythrocytes. In Sylvirana spinulosa (Fine-spined frog), this protein is Brevinin-1SN2.